The chain runs to 247 residues: Small ribosomal subunit protein uS2 (247 aa).

This sequence belongs to the universal ribosomal protein uS2 family.

The chain is Small ribosomal subunit protein uS2 from Pseudomonas syringae pv. syringae (strain B728a).